A 712-amino-acid polypeptide reads, in one-letter code: MTSPVAQCASVPDSGLLCLVMLARYHGLAADPEQLRHEFAEQAFCSETIQLAARRVGLKVRRHRPAPARLPRAPLPAIALDRQGGYFVLARFEPGADQAVLIQRPGQAPARLGQAEFEALWAGELLLCACAASPTQALARFDFSWFIPALVKHRHLIGEVLLISLVLQFISLLTPLFFQVVMDKVLVNNAMETLNVIAVGFLAAILFEALLTGIRTYLFAHTSSKLDVELGARLYAHLLRLPLAYFQARRVGDSVARVRELEHIRAFLTGNAVTVLLDVVFSVVFIAVMFFYSVKLTLVVLAALPCYFLLSLVLTPVLRRRLDVKFNRGAENQAFLVETVSGIDTVKSLAVEPQWQRNWDRQLAGYVAAGLSVANVAMLANTGVTLISRLVALGVLWVGATEVVAQRMTVGELVAFNMLSGHVTQPVIRLAQLWNDFQQTGVSMQRLGDILNCRTEVAGDKAQLPALRGSIELDRVSFRYRPDAADALRNVSLRIAPGEVVGVVGRSGSGKSTLTRLIQRMFVADRGRVLIDGHDIGIVDSASLRRQLGVVLQESTLFNRSVRDNIALTRPGASMHEVVAAARLAGAHEFICQLPEGYDTMLGENGVGLSGGQRQRIGIARALIHRPRVLILDEATSALDYESEHIIQRNMRDICDGRTVIIIAHRLSAVRCADRIVVMEGGEVAECGSHETLLAAGGLYARLQALQAGEAG.

Residues 7–128 (QCASVPDSGL…ALWAGELLLC (122 aa)) form the Peptidase C39 domain. The region spanning 157 to 439 (IGEVLLISLV…LAQLWNDFQQ (283 aa)) is the ABC transmembrane type-1 domain. The next 6 membrane-spanning stretches (helical) occupy residues 160-180 (VLLI…FFQV), 194-214 (LNVI…LTGI), 272-292 (AVTV…MFFY), 298-318 (LVVL…TPVL), 367-387 (VAAG…VTLI), and 390-410 (LVAL…RMTV). Residues 471–706 (IELDRVSFRY…GGLYARLQAL (236 aa)) form the ABC transporter domain. Residue 505 to 512 (GRSGSGKS) coordinates ATP.

This sequence belongs to the ABC transporter superfamily. Cyclolysin exporter (TC 3.A.1.109.2) family.

Its subcellular location is the cell membrane. Its function is as follows. Involved in the export of calmodulin-sensitive adenylate cyclase-hemolysin (cyclolysin). This Bordetella pertussis (strain ATCC 9797 / DSM 5571 / CCUG 30873 / LMG 14455 / NCTC 10739 / 18323) protein is Cyclolysin secretion/processing ATP-binding protein CyaB (cyaB).